The primary structure comprises 290 residues: Arylamine N-acetyltransferase 1 (290 aa).

The residue at position 1 (Met1) is an N-acetylmethionine. The active-site Acyl-thioester intermediate is Cys68. The CoA site is built by Thr103 and Gly104. Ile106–His107 lines the substrate pocket. Residues His107 and Asp122 contribute to the active site. Residues Tyr208 and Ser214 each contribute to the CoA site.

Belongs to the arylamine N-acetyltransferase family.

Its subcellular location is the cytoplasm. It catalyses the reaction an arylamine + acetyl-CoA = an N-acetylarylamine + CoA. In Oryctolagus cuniculus (Rabbit), this protein is Arylamine N-acetyltransferase 1 (NAT1).